The chain runs to 795 residues: Histidine biosynthesis trifunctional protein (795 aa).

The tract at residues 1 to 225 is phosphoribosyl-AMP cyclohydrolase; that stretch reads MLPVVPVFNA…VVRQGGSGSF (225 aa). The segment at 226-308 is phosphoribosyl-ATP pyrophosphohydrolase; sequence CHLETESCFG…FYFAMARLVA (83 aa). The segment at 309–795 is histidinol dehydrogenase; the sequence is NGVSLEDVER…KLGLLPSGFE (487 aa). The Zn(2+) site is built by Q614 and H617. Catalysis depends on residues E683 and H684. Residues D717 and H776 each contribute to the Zn(2+) site.

The protein in the C-terminal section; belongs to the histidinol dehydrogenase family. Zn(2+) is required as a cofactor.

It carries out the reaction 1-(5-phospho-beta-D-ribosyl)-5'-AMP + H2O = 1-(5-phospho-beta-D-ribosyl)-5-[(5-phospho-beta-D-ribosylamino)methylideneamino]imidazole-4-carboxamide. The catalysed reaction is 1-(5-phospho-beta-D-ribosyl)-ATP + H2O = 1-(5-phospho-beta-D-ribosyl)-5'-AMP + diphosphate + H(+). It catalyses the reaction L-histidinol + 2 NAD(+) + H2O = L-histidine + 2 NADH + 3 H(+). Its pathway is amino-acid biosynthesis; L-histidine biosynthesis; L-histidine from 5-phospho-alpha-D-ribose 1-diphosphate: step 2/9. It functions in the pathway amino-acid biosynthesis; L-histidine biosynthesis; L-histidine from 5-phospho-alpha-D-ribose 1-diphosphate: step 3/9. It participates in amino-acid biosynthesis; L-histidine biosynthesis; L-histidine from 5-phospho-alpha-D-ribose 1-diphosphate: step 9/9. The protein is Histidine biosynthesis trifunctional protein (HIS4) of Kluyveromyces lactis (strain ATCC 8585 / CBS 2359 / DSM 70799 / NBRC 1267 / NRRL Y-1140 / WM37) (Yeast).